Consider the following 341-residue polypeptide: Formimidoylglutamase (341 aa).

The Mn(2+) site is built by H133, D162, H164, D166, C253, and D255.

Belongs to the arginase family. Mn(2+) is required as a cofactor.

It carries out the reaction N-formimidoyl-L-glutamate + H2O = formamide + L-glutamate. It participates in amino-acid degradation; L-histidine degradation into L-glutamate; L-glutamate from N-formimidoyl-L-glutamate (hydrolase route): step 1/1. In terms of biological role, catalyzes the conversion of N-formimidoyl-L-glutamate to L-glutamate and formamide. This chain is Formimidoylglutamase, found in Aromatoleum aromaticum (strain DSM 19018 / LMG 30748 / EbN1) (Azoarcus sp. (strain EbN1)).